We begin with the raw amino-acid sequence, 126 residues long: Large-conductance mechanosensitive channel (126 aa).

2 helical membrane-spanning segments follow: residues 8-28 and 70-90; these read FAMRGNVIDLAVAVVLGAAFT and IQQIVSFFLIAIALFLIVKVI.

The protein belongs to the MscL family. In terms of assembly, homopentamer.

Its subcellular location is the cell membrane. Its function is as follows. Channel that opens in response to stretch forces in the membrane lipid bilayer. May participate in the regulation of osmotic pressure changes within the cell. The protein is Large-conductance mechanosensitive channel of Exiguobacterium sp. (strain ATCC BAA-1283 / AT1b).